We begin with the raw amino-acid sequence, 291 residues long: tRNA dimethylallyltransferase (291 aa).

Residue 8-15 (GSTASGKT) coordinates ATP. 10-15 (TASGKT) contacts substrate. Residues 33-36 (DSLC) form an interaction with substrate tRNA region.

This sequence belongs to the IPP transferase family. As to quaternary structure, monomer. Mg(2+) serves as cofactor.

It catalyses the reaction adenosine(37) in tRNA + dimethylallyl diphosphate = N(6)-dimethylallyladenosine(37) in tRNA + diphosphate. Catalyzes the transfer of a dimethylallyl group onto the adenine at position 37 in tRNAs that read codons beginning with uridine, leading to the formation of N6-(dimethylallyl)adenosine (i(6)A). The sequence is that of tRNA dimethylallyltransferase from Aliarcobacter butzleri (strain RM4018) (Arcobacter butzleri).